Consider the following 144-residue polypeptide: Ribosome-binding factor A (144 aa).

Disordered stretches follow at residues 1-22 (MPRHHQKKSSASGGGSQRQLRV) and 125-144 (TPAVQKDLEQDPDSDREEEQ). Positions 134–144 (QDPDSDREEEQ) are enriched in acidic residues.

The protein belongs to the RbfA family. Monomer. Binds 30S ribosomal subunits, but not 50S ribosomal subunits or 70S ribosomes.

The protein resides in the cytoplasm. Its function is as follows. One of several proteins that assist in the late maturation steps of the functional core of the 30S ribosomal subunit. Associates with free 30S ribosomal subunits (but not with 30S subunits that are part of 70S ribosomes or polysomes). Required for efficient processing of 16S rRNA. May interact with the 5'-terminal helix region of 16S rRNA. The polypeptide is Ribosome-binding factor A (Bradyrhizobium diazoefficiens (strain JCM 10833 / BCRC 13528 / IAM 13628 / NBRC 14792 / USDA 110)).